Consider the following 173-residue polypeptide: MTHPIFMVGARGCGKTTVGHQLAQALGYDFVDTDLFMQQTTNMTVADVVAQEGWHGFRQRESLALQQVTSNRCIIATGGGMVLAEANRRFMHDKGTVIYLHADAELLAQRLEENPQDNQRPTLTGRPIAEEMADVLAAREALYRGVAHHVIDASQAPEAIVASVLKALRLSAA.

12–17 (GCGKTT) is a binding site for ATP. The Mg(2+) site is built by Thr16 and Asp32. Residues Asp34, Arg58, and Gly79 each contribute to the substrate site. The interval 112-126 (EENPQDNQRPTLTGR) is LID domain. Arg120 lines the ATP pocket. Arg139 lines the substrate pocket. An ATP-binding site is contributed by Gln155.

It belongs to the shikimate kinase family. AroL subfamily. In terms of assembly, monomer. Mg(2+) serves as cofactor.

Its subcellular location is the cytoplasm. The enzyme catalyses shikimate + ATP = 3-phosphoshikimate + ADP + H(+). The protein operates within metabolic intermediate biosynthesis; chorismate biosynthesis; chorismate from D-erythrose 4-phosphate and phosphoenolpyruvate: step 5/7. Catalyzes the specific phosphorylation of the 3-hydroxyl group of shikimic acid using ATP as a cosubstrate. The sequence is that of Shikimate kinase 2 from Pectobacterium carotovorum subsp. carotovorum (strain PC1).